The sequence spans 295 residues: Phosphoribosylaminoimidazole-succinocarboxamide synthase (295 aa).

The protein belongs to the SAICAR synthetase family.

It catalyses the reaction 5-amino-1-(5-phospho-D-ribosyl)imidazole-4-carboxylate + L-aspartate + ATP = (2S)-2-[5-amino-1-(5-phospho-beta-D-ribosyl)imidazole-4-carboxamido]succinate + ADP + phosphate + 2 H(+). It participates in purine metabolism; IMP biosynthesis via de novo pathway; 5-amino-1-(5-phospho-D-ribosyl)imidazole-4-carboxamide from 5-amino-1-(5-phospho-D-ribosyl)imidazole-4-carboxylate: step 1/2. The protein is Phosphoribosylaminoimidazole-succinocarboxamide synthase of Corynebacterium ammoniagenes (Brevibacterium ammoniagenes).